We begin with the raw amino-acid sequence, 673 residues long: UvrABC system protein B (673 aa).

The Helicase ATP-binding domain maps to 29-188 (EGLNDGLAHQ…LAELQYTRND (160 aa)). 42 to 49 (GVTGSGKT) contacts ATP. The Beta-hairpin signature appears at 95-118 (YYDYYQPEAYVPSSDTFIEKDASI). The Helicase C-terminal domain occupies 434 to 600 (QVDDVLSEIH…ALNKKVGELL (167 aa)). Residues 607–632 (KPKRGKQAVKVEEKSANTYKPKSRKE) are disordered. One can recognise a UVR domain in the interval 634 to 669 (EKELKQLEQQMRDFAKDLEFEKAAAVRDKIGQLKAV).

This sequence belongs to the UvrB family. Forms a heterotetramer with UvrA during the search for lesions. Interacts with UvrC in an incision complex.

The protein resides in the cytoplasm. Its function is as follows. The UvrABC repair system catalyzes the recognition and processing of DNA lesions. A damage recognition complex composed of 2 UvrA and 2 UvrB subunits scans DNA for abnormalities. Upon binding of the UvrA(2)B(2) complex to a putative damaged site, the DNA wraps around one UvrB monomer. DNA wrap is dependent on ATP binding by UvrB and probably causes local melting of the DNA helix, facilitating insertion of UvrB beta-hairpin between the DNA strands. Then UvrB probes one DNA strand for the presence of a lesion. If a lesion is found the UvrA subunits dissociate and the UvrB-DNA preincision complex is formed. This complex is subsequently bound by UvrC and the second UvrB is released. If no lesion is found, the DNA wraps around the other UvrB subunit that will check the other stand for damage. This chain is UvrABC system protein B, found in Actinobacillus pleuropneumoniae serotype 5b (strain L20).